Consider the following 581-residue polypeptide: Arginine--tRNA ligase (581 aa).

Residues 123 to 133 carry the 'HIGH' region motif; it reads PNVAKEMHVGH.

Belongs to the class-I aminoacyl-tRNA synthetase family. In terms of assembly, monomer.

The protein resides in the cytoplasm. The catalysed reaction is tRNA(Arg) + L-arginine + ATP = L-arginyl-tRNA(Arg) + AMP + diphosphate. This Blochmanniella pennsylvanica (strain BPEN) protein is Arginine--tRNA ligase.